The following is a 202-amino-acid chain: Matrix protein (202 aa).

The short motif at 35 to 38 is the PPXY motif element; the sequence is PPEY. Residues 115–151 form an essential for glycoprotein binding region; that stretch reads KIRRTLVFQWAESRGPLDGEELEYSQEITWDDDSEFI.

This sequence belongs to the lyssavirus matrix protein family. Homomultimer. Interacts with nucleoprotein and with the cytoplasmic domain of glycoprotein.

It localises to the virion membrane. The protein resides in the host endomembrane system. Its function is as follows. Plays a major role in assembly and budding of virion. Completely covers the ribonucleoprotein coil and keep it in condensed bullet-shaped form. Inhibits viral transcription and stimulates replication. Plays a major role in early induction of TRAIL-mediated apoptosis in infected neurons. The chain is Matrix protein (M) from Aravan virus (ARAV).